The chain runs to 227 residues: Cytochrome c oxidase subunit 2 (227 aa).

Topologically, residues 1 to 14 (MAYPMQLGFQDATS) are mitochondrial intermembrane. Residues 15–45 (PIMEELLHFHDHTLMIVLLISSLVLYIISLM) form a helical membrane-spanning segment. At 46 to 59 (LTTKLTHTSTMDAQ) the chain is on the mitochondrial matrix side. The chain crosses the membrane as a helical span at residues 60–87 (EVETIWTILPAIILILIALPSLRILYMM). The Mitochondrial intermembrane portion of the chain corresponds to 88–227 (DEINNPSLTV…YFEKWSASML (140 aa)). Positions 161, 196, 198, 200, 204, and 207 each coordinate Cu cation. A Mg(2+)-binding site is contributed by glutamate 198. Tyrosine 218 is subject to Phosphotyrosine.

It belongs to the cytochrome c oxidase subunit 2 family. Component of the cytochrome c oxidase (complex IV, CIV), a multisubunit enzyme composed of 14 subunits. The complex is composed of a catalytic core of 3 subunits MT-CO1, MT-CO2 and MT-CO3, encoded in the mitochondrial DNA, and 11 supernumerary subunits COX4I, COX5A, COX5B, COX6A, COX6B, COX6C, COX7A, COX7B, COX7C, COX8 and NDUFA4, which are encoded in the nuclear genome. The complex exists as a monomer or a dimer and forms supercomplexes (SCs) in the inner mitochondrial membrane with NADH-ubiquinone oxidoreductase (complex I, CI) and ubiquinol-cytochrome c oxidoreductase (cytochrome b-c1 complex, complex III, CIII), resulting in different assemblies (supercomplex SCI(1)III(2)IV(1) and megacomplex MCI(2)III(2)IV(2)). Found in a complex with TMEM177, COA6, COX18, COX20, SCO1 and SCO2. Interacts with TMEM177 in a COX20-dependent manner. Interacts with COX20. Interacts with COX16. Cu cation serves as cofactor.

It localises to the mitochondrion inner membrane. The catalysed reaction is 4 Fe(II)-[cytochrome c] + O2 + 8 H(+)(in) = 4 Fe(III)-[cytochrome c] + 2 H2O + 4 H(+)(out). Functionally, component of the cytochrome c oxidase, the last enzyme in the mitochondrial electron transport chain which drives oxidative phosphorylation. The respiratory chain contains 3 multisubunit complexes succinate dehydrogenase (complex II, CII), ubiquinol-cytochrome c oxidoreductase (cytochrome b-c1 complex, complex III, CIII) and cytochrome c oxidase (complex IV, CIV), that cooperate to transfer electrons derived from NADH and succinate to molecular oxygen, creating an electrochemical gradient over the inner membrane that drives transmembrane transport and the ATP synthase. Cytochrome c oxidase is the component of the respiratory chain that catalyzes the reduction of oxygen to water. Electrons originating from reduced cytochrome c in the intermembrane space (IMS) are transferred via the dinuclear copper A center (CU(A)) of subunit 2 and heme A of subunit 1 to the active site in subunit 1, a binuclear center (BNC) formed by heme A3 and copper B (CU(B)). The BNC reduces molecular oxygen to 2 water molecules using 4 electrons from cytochrome c in the IMS and 4 protons from the mitochondrial matrix. The polypeptide is Cytochrome c oxidase subunit 2 (MT-CO2) (Bubalus depressicornis (Lowland anoa)).